Here is a 350-residue protein sequence, read N- to C-terminus: Ion-translocating oxidoreductase complex subunit D (350 aa).

The next 4 membrane-spanning stretches (helical) occupy residues 20-40 (VMLWVILAALPGLLAQTLFFG), 42-62 (GNLINVVWCIALALGSEAAFL), 89-109 (LPQFTPWWVSGIAVVSAIVVA), and 120-140 (PFNPAMVGYALALISFPVAMT). Thr-178 is modified (FMN phosphoryl threonine). 5 helical membrane-spanning segments follow: residues 204–224 (LIARGWEWVNLAFLAGGVLLI), 228–248 (IITWHIPVAFLAGIAAMSLAF), 255–275 (YAPLQLHLLAGGTMLGAFFIA), 282–302 (ATSHQGKLIYGAGIGVLVYLI), and 306–326 (GNYPDAVAFSVLLMNFAVPFI).

This sequence belongs to the NqrB/RnfD family. In terms of assembly, the complex is composed of six subunits: RnfA, RnfB, RnfC, RnfD, RnfE and RnfG. FMN serves as cofactor.

The protein resides in the cell inner membrane. Its function is as follows. Part of a membrane-bound complex that couples electron transfer with translocation of ions across the membrane. This chain is Ion-translocating oxidoreductase complex subunit D, found in Marinobacter nauticus (strain ATCC 700491 / DSM 11845 / VT8) (Marinobacter aquaeolei).